Consider the following 253-residue polypeptide: Chromosome-partitioning ATPase Soj (253 aa).

10 residues coordinate ATP: Lys-11, Gly-12, Gly-13, Val-14, Gly-15, Lys-16, Thr-17, Thr-18, Pro-211, and Asn-213. Thr-17 is a binding site for Mg(2+).

Belongs to the ParA family.

It carries out the reaction ATP + H2O = ADP + phosphate + H(+). Its function is as follows. ATPase probably involved in chromosome partitioning. Cooperatively binds dsDNA, forming nucleoprotein filaments in a strictly ATP-dependent fashion. The protein is Chromosome-partitioning ATPase Soj of Treponema pallidum (strain Nichols).